The primary structure comprises 441 residues: uncharacterized protein (441 aa).

G57–T64 contributes to the ATP binding site.

This is an uncharacterized protein from Methanocaldococcus jannaschii (strain ATCC 43067 / DSM 2661 / JAL-1 / JCM 10045 / NBRC 100440) (Methanococcus jannaschii).